We begin with the raw amino-acid sequence, 139 residues long: Classical arabinogalactan protein 3 (139 aa).

An N-terminal signal peptide occupies residues 1-21 (MALKTLQALIFLGLFAASCLA). Glutamine 22 carries the pyrrolidone carboxylic acid modification. The tract at residues 30-115 (TFLPPVESPS…PAPRADGPVA (86 aa)) is disordered. Composition is skewed to pro residues over residues 46–77 (AEPPAPVASPPIPANEPTPVPTTPPTVSPPTT) and 97–107 (PSGPTPAPAPA). A lipid anchor (GPI-anchor amidated aspartate) is attached at aspartate 116. A propeptide spans 117–139 (SALTNKAFLVSTVIAGALYAVLA) (removed in mature form).

Belongs to the classical AGP family. Post-translationally, O-glycosylated on the hydroxyproline residues. In terms of tissue distribution, expressed at a low level in roots.

Its subcellular location is the cell membrane. Functionally, proteoglycan that seems to be implicated in diverse developmental roles such as differentiation, cell-cell recognition, embryogenesis and programmed cell death. This is Classical arabinogalactan protein 3 (AGP3) from Arabidopsis thaliana (Mouse-ear cress).